The following is a 479-amino-acid chain: Poly(A) polymerase catalytic subunit (479 aa).

Residues D202 and D204 contribute to the active site. 3 residues coordinate Ca(2+): D202, D204, and D253.

Belongs to the poxviridae poly(A) polymerase catalytic subunit family. As to quaternary structure, heterodimer of a large (catalytic) subunit and a small (regulatory) subunit.

It catalyses the reaction RNA(n) + ATP = RNA(n)-3'-adenine ribonucleotide + diphosphate. Its function is as follows. Polymerase that creates the 3'-poly(A) tail of mRNA's. In Cynomys gunnisoni (Gunnison's prairie dog), this protein is Poly(A) polymerase catalytic subunit (OPG063).